The primary structure comprises 133 residues: Beta-synuclein (133 aa).

2 consecutive repeat copies span residues 20–30 and 31–41. Residues 20–66 form a 4 X 11 AA tandem repeats of [EGS]-K-T-K-[EQ]-[GQ]-V-X(4) region; sequence EKTKQGVTEAAEKTKEGVLYVGSKTSGVVQGVASVAEKTKEQASHLG. A 3; approximate repeat occupies 42 to 55; it reads SKTSGVVQGVASVA. S45 bears the Phosphoserine mark. Residues 56–66 form repeat 4; the sequence is EKTKEQASHLG. The segment at 96-133 is disordered; sequence EVAQEAAEEPLIEPLMEPEGESYEDSPQEEYQEYEPEA. Residues 97-133 are compositionally biased toward acidic residues; the sequence is VAQEAAEEPLIEPLMEPEGESYEDSPQEEYQEYEPEA. S117 is modified (phosphoserine; by BARK1, CK2 and GRK5).

Belongs to the synuclein family. In terms of processing, phosphorylated. Phosphorylation by G-protein coupled receptor kinases (GRK) is more efficient than phosphorylation by CK1, CK2 and CaM-kinase II. Highly expressed in the brain.

The protein localises to the cytoplasm. Functionally, may be involved in neuronal plasticity. The sequence is that of Beta-synuclein (Sncb) from Mus musculus (Mouse).